The primary structure comprises 115 residues: NAD(P)H-quinone oxidoreductase subunit M (115 aa).

The protein belongs to the complex I NdhM subunit family. NDH-1 can be composed of about 15 different subunits; different subcomplexes with different compositions have been identified which probably have different functions.

The protein localises to the cellular thylakoid membrane. It carries out the reaction a plastoquinone + NADH + (n+1) H(+)(in) = a plastoquinol + NAD(+) + n H(+)(out). The catalysed reaction is a plastoquinone + NADPH + (n+1) H(+)(in) = a plastoquinol + NADP(+) + n H(+)(out). Its function is as follows. NDH-1 shuttles electrons from an unknown electron donor, via FMN and iron-sulfur (Fe-S) centers, to quinones in the respiratory and/or the photosynthetic chain. The immediate electron acceptor for the enzyme in this species is believed to be plastoquinone. Couples the redox reaction to proton translocation, and thus conserves the redox energy in a proton gradient. Cyanobacterial NDH-1 also plays a role in inorganic carbon-concentration. The sequence is that of NAD(P)H-quinone oxidoreductase subunit M from Synechococcus sp. (strain CC9902).